The chain runs to 187 residues: Peptidyl-tRNA hydrolase (187 aa).

His-14 lines the tRNA pocket. The active-site Proton acceptor is the His-19. Positions 62, 64, and 110 each coordinate tRNA.

This sequence belongs to the PTH family. As to quaternary structure, monomer.

It is found in the cytoplasm. It carries out the reaction an N-acyl-L-alpha-aminoacyl-tRNA + H2O = an N-acyl-L-amino acid + a tRNA + H(+). Its function is as follows. Hydrolyzes ribosome-free peptidyl-tRNAs (with 1 or more amino acids incorporated), which drop off the ribosome during protein synthesis, or as a result of ribosome stalling. Functionally, catalyzes the release of premature peptidyl moieties from peptidyl-tRNA molecules trapped in stalled 50S ribosomal subunits, and thus maintains levels of free tRNAs and 50S ribosomes. This Chlorobaculum tepidum (strain ATCC 49652 / DSM 12025 / NBRC 103806 / TLS) (Chlorobium tepidum) protein is Peptidyl-tRNA hydrolase.